A 315-amino-acid chain; its full sequence is Methionyl-tRNA formyltransferase (315 aa).

109-112 (SLLP) provides a ligand contact to (6S)-5,6,7,8-tetrahydrofolate.

This sequence belongs to the Fmt family.

The enzyme catalyses L-methionyl-tRNA(fMet) + (6R)-10-formyltetrahydrofolate = N-formyl-L-methionyl-tRNA(fMet) + (6S)-5,6,7,8-tetrahydrofolate + H(+). Its function is as follows. Attaches a formyl group to the free amino group of methionyl-tRNA(fMet). The formyl group appears to play a dual role in the initiator identity of N-formylmethionyl-tRNA by promoting its recognition by IF2 and preventing the misappropriation of this tRNA by the elongation apparatus. The sequence is that of Methionyl-tRNA formyltransferase from Lachnospira eligens (strain ATCC 27750 / DSM 3376 / VPI C15-48 / C15-B4) (Eubacterium eligens).